The primary structure comprises 630 residues: 1-deoxy-D-xylulose-5-phosphate synthase (630 aa).

Thiamine diphosphate contacts are provided by residues His-72 and 113–115; that span reads GHS. Asp-144 serves as a coordination point for Mg(2+). Residues 145–146, Asn-173, Tyr-284, and Glu-367 contribute to the thiamine diphosphate site; that span reads GA. Asn-173 contacts Mg(2+).

It belongs to the transketolase family. DXPS subfamily. In terms of assembly, homodimer. Mg(2+) is required as a cofactor. It depends on thiamine diphosphate as a cofactor.

The catalysed reaction is D-glyceraldehyde 3-phosphate + pyruvate + H(+) = 1-deoxy-D-xylulose 5-phosphate + CO2. It participates in metabolic intermediate biosynthesis; 1-deoxy-D-xylulose 5-phosphate biosynthesis; 1-deoxy-D-xylulose 5-phosphate from D-glyceraldehyde 3-phosphate and pyruvate: step 1/1. Catalyzes the acyloin condensation reaction between C atoms 2 and 3 of pyruvate and glyceraldehyde 3-phosphate to yield 1-deoxy-D-xylulose-5-phosphate (DXP). The chain is 1-deoxy-D-xylulose-5-phosphate synthase from Bacillus cereus (strain AH820).